We begin with the raw amino-acid sequence, 2027 residues long: Mediator of RNA polymerase II transcription subunit 12 (2027 aa).

Tyr13 carries the post-translational modification Phosphotyrosine. Disordered stretches follow at residues 170–191, 474–516, 538–563, and 1088–1113; these read QSTS…TPST, GAPG…MDID, MPCE…PPKE, and TVTG…QGGR. A phosphoserine mark is found at Ser482, Ser512, Ser545, and Ser547. Residues 549 to 563 are compositionally biased toward basic and acidic residues; it reads EKPDVEKEVKPPPKE. Phosphoserine occurs at positions 1105 and 1116. Low complexity predominate over residues 1241–1258; it reads AETGSSSGSTASNMPSSS. Disordered stretches follow at residues 1241-1262, 1297-1321, and 1585-1676; these read AETG…KTKP, ELEK…KSMS, and YLEP…PGSI. 2 stretches are compositionally biased toward basic and acidic residues: residues 1297–1316 and 1605–1618; these read ELEK…DRQK and EPEK…KTDK. Residues 1463–1901 form an interaction with CTNNB1 and GLI3 region; that stretch reads LAKKLQKELG…VRSTAILPEQ (439 aa). Basic residues predominate over residues 1631 to 1640; that stretch reads KKSTKGKKRS. The residue at position 1645 (Lys1645) is an N6-acetyllysine. Arg1746 bears the Asymmetric dimethylarginine; alternate mark. At Arg1746 the chain carries Omega-N-methylarginine; alternate. Arg1757 carries the omega-N-methylarginine modification. The tract at residues 1805–1848 is disordered; it reads QHTGPAGTMVPPSYSSQPYQSTHPSTNPTLVDPTRHLQQRPSGY. Low complexity predominate over residues 1815-1830; that stretch reads PPSYSSQPYQSTHPST. Asymmetric dimethylarginine is present on residues Arg1844 and Arg1865. 3 stretches are compositionally biased toward low complexity: residues 1965–1975, 1983–1999, and 2008–2021; these read QHQQQQQQQAA, SQPQ…QQQQ, and LQQQ…QPST. Disordered stretches follow at residues 1965 to 1999 and 2008 to 2027; these read QHQQ…QQQQ and LQQQ…FGRY.

It belongs to the Mediator complex subunit 12 family. As to quaternary structure, component of the Mediator complex, which is composed of MED1, MED4, MED6, MED7, MED8, MED9, MED10, MED11, MED12, MED13, MED13L, MED14, MED15, MED16, MED17, MED18, MED19, MED20, MED21, MED22, MED23, MED24, MED25, MED26, MED27, MED29, MED30, MED31, CCNC, CDK8 and CDC2L6/CDK11. The MED12, MED13, CCNC and CDK8 subunits form a distinct module termed the CDK8 module. Mediator containing the CDK8 module is less active than Mediator lacking this module in supporting transcriptional activation. Individual preparations of the Mediator complex lacking one or more distinct subunits have been variously termed ARC, CRSP, DRIP, PC2, SMCC and TRAP. Also interacts with CTNNB1 and GLI3.

The protein resides in the nucleus. Its function is as follows. Component of the Mediator complex, a coactivator involved in the regulated transcription of nearly all RNA polymerase II-dependent genes. Mediator functions as a bridge to convey information from gene-specific regulatory proteins to the basal RNA polymerase II transcription machinery. Mediator is recruited to promoters by direct interactions with regulatory proteins and serves as a scaffold for the assembly of a functional preinitiation complex with RNA polymerase II and the general transcription factors. This subunit may specifically regulate transcription of targets of the Wnt signaling pathway and SHH signaling pathway. This Pan troglodytes (Chimpanzee) protein is Mediator of RNA polymerase II transcription subunit 12 (MED12).